Here is a 276-residue protein sequence, read N- to C-terminus: TCP pilus virulence regulatory protein (276 aa).

Residues 172 to 269 (EKISCLVKSD…NVAPSEYLFM (98 aa)) form the HTH araC/xylS-type domain. DNA-binding regions (H-T-H motif) lie at residues 189–210 (ADIC…ESRG) and 236–259 (IKQI…KSTM).

It localises to the cytoplasm. In terms of biological role, probable regulatory protein for the tcp operon. The polypeptide is TCP pilus virulence regulatory protein (tcpN) (Vibrio cholerae serotype O1 (strain ATCC 39541 / Classical Ogawa 395 / O395)).